Reading from the N-terminus, the 138-residue chain is Large ribosomal subunit protein uL16 (138 aa).

Over residues 1–15 (MLSPRKVKYRKKQRG) the composition is skewed to basic residues. Residues 1 to 21 (MLSPRKVKYRKKQRGRLSGEA) form a disordered region.

The protein belongs to the universal ribosomal protein uL16 family. Part of the 50S ribosomal subunit.

Its function is as follows. Binds 23S rRNA and is also seen to make contacts with the A and possibly P site tRNAs. The sequence is that of Large ribosomal subunit protein uL16 from Borrelia recurrentis (strain A1).